Here is a 96-residue protein sequence, read N- to C-terminus: C-C motif chemokine 1 (96 aa).

An N-terminal signal peptide occupies residues 1-23; the sequence is MQIITTALVCLLLAGMWPEDVDS. Intrachain disulfides connect cysteine 33–cysteine 57, cysteine 34–cysteine 73, and cysteine 49–cysteine 91. Asparagine 52 is a glycosylation site (N-linked (GlcNAc...) asparagine).

It belongs to the intercrine beta (chemokine CC) family. In terms of assembly, monomer.

It is found in the secreted. Its function is as follows. Cytokine that is chemotactic for monocytes but not for neutrophils. Binds to CCR8. The sequence is that of C-C motif chemokine 1 (CCL1) from Homo sapiens (Human).